The chain runs to 300 residues: Probable ABC transporter permease protein YurM (300 aa).

Helical transmembrane passes span valine 37–methionine 57, valine 98–glycine 118, phenylalanine 129–leucine 149, threonine 161–isoleucine 181, phenylalanine 204–isoleucine 224, and tryptophan 264–leucine 284. In terms of domain architecture, ABC transmembrane type-1 spans phenylalanine 94–methionine 285.

It belongs to the binding-protein-dependent transport system permease family. MalFG subfamily.

It is found in the cell membrane. Functionally, probably part of the binding-protein-dependent transport system YurMNO. Probably responsible for the translocation of the substrate across the membrane. The chain is Probable ABC transporter permease protein YurM (yurM) from Bacillus subtilis (strain 168).